The sequence spans 106 residues: Large ribosomal subunit protein eL42 (106 aa).

Residues 26-53 are disordered; the sequence is YKKGKDSLYAQGKRRYDRKQSGYGGQTK.

Belongs to the eukaryotic ribosomal protein eL42 family. In terms of assembly, component of the large ribosomal subunit.

It localises to the cytoplasm. Component of the large ribosomal subunit. The ribosome is a large ribonucleoprotein complex responsible for the synthesis of proteins in the cell. The polypeptide is Large ribosomal subunit protein eL42 (rpl36a) (Danio rerio (Zebrafish)).